The sequence spans 607 residues: UvrABC system protein C (607 aa).

The region spanning 16 to 94 (GRPGVYRMFD…IKEWRPPYNI (79 aa)) is the GIY-YIG domain. In terms of domain architecture, UVR spans 203-238 (NALTDELSTAMEAAASTLDFEKAAELRDQISLLRRV).

It belongs to the UvrC family. In terms of assembly, interacts with UvrB in an incision complex.

Its subcellular location is the cytoplasm. Functionally, the UvrABC repair system catalyzes the recognition and processing of DNA lesions. UvrC both incises the 5' and 3' sides of the lesion. The N-terminal half is responsible for the 3' incision and the C-terminal half is responsible for the 5' incision. The protein is UvrABC system protein C of Pseudomonas fluorescens (strain ATCC BAA-477 / NRRL B-23932 / Pf-5).